Reading from the N-terminus, the 66-residue chain is Large ribosomal subunit protein bL33c (66 aa).

It belongs to the bacterial ribosomal protein bL33 family.

The protein resides in the plastid. Its subcellular location is the chloroplast. The sequence is that of Large ribosomal subunit protein bL33c from Glycine max (Soybean).